A 547-amino-acid chain; its full sequence is uncharacterized protein (547 aa).

12 helical membrane-spanning segments follow: residues 33-53 (PTFF…IMVI), 107-127 (PLIV…GVIF), 145-165 (TGLI…LSFA), 203-223 (VYIL…FYLA), 231-251 (FIAI…FLLV), 263-283 (VAGI…LIYL), 298-318 (LNKI…ASFF), 351-371 (TLLT…FGLL), 397-417 (TVII…VAFG), 432-452 (LDLA…VATG), 470-490 (IVSL…FQAI), and 499-519 (VFIW…IAFG).

Its subcellular location is the cell membrane. This is an uncharacterized protein from Mycoplasma genitalium (strain ATCC 33530 / DSM 19775 / NCTC 10195 / G37) (Mycoplasmoides genitalium).